Reading from the N-terminus, the 1368-residue chain is DNA-directed RNA polymerase subunit beta (1368 aa).

Belongs to the RNA polymerase beta chain family. As to quaternary structure, the RNAP catalytic core consists of 2 alpha, 1 beta, 1 beta' and 1 omega subunit. When a sigma factor is associated with the core the holoenzyme is formed, which can initiate transcription.

The catalysed reaction is RNA(n) + a ribonucleoside 5'-triphosphate = RNA(n+1) + diphosphate. Functionally, DNA-dependent RNA polymerase catalyzes the transcription of DNA into RNA using the four ribonucleoside triphosphates as substrates. This chain is DNA-directed RNA polymerase subunit beta, found in Ralstonia nicotianae (strain ATCC BAA-1114 / GMI1000) (Ralstonia solanacearum).